We begin with the raw amino-acid sequence, 183 residues long: Ribosome-recycling factor (183 aa).

It belongs to the RRF family.

Its subcellular location is the cytoplasm. Functionally, responsible for the release of ribosomes from messenger RNA at the termination of protein biosynthesis. May increase the efficiency of translation by recycling ribosomes from one round of translation to another. The chain is Ribosome-recycling factor from Bifidobacterium longum subsp. infantis (strain ATCC 15697 / DSM 20088 / JCM 1222 / NCTC 11817 / S12).